The following is a 305-amino-acid chain: Glutaminase (305 aa).

Substrate is bound by residues Ser-61, Asn-113, Glu-158, Asn-165, Tyr-189, Tyr-241, and Val-259.

This sequence belongs to the glutaminase family. In terms of assembly, homotetramer.

It catalyses the reaction L-glutamine + H2O = L-glutamate + NH4(+). In Alkaliphilus oremlandii (strain OhILAs) (Clostridium oremlandii (strain OhILAs)), this protein is Glutaminase.